We begin with the raw amino-acid sequence, 909 residues long: Short transient receptor potential channel 3 (909 aa).

The segment at 1-92 (MSTKVKKCRE…VRGPAFMFGA (92 aa)) is disordered. Residues 1 to 447 (MSTKVKKCRE…KILRSPFMKF (447 aa)) are Cytoplasmic-facing. Residues 19–28 (PEEEDGEAEG) are compositionally biased toward acidic residues. Residues 47-57 (PPCPRAPPSPG) show a composition bias toward pro residues. Positions 58-67 (PDASSEGSPS) are enriched in low complexity. ANK repeat units lie at residues 99–128 (AEEE…TLNV), 134–163 (MGQN…LARI), 165–191 (DALL…FAAS), and 220–249 (PDIT…RIER). Ca(2+) is bound at residue E146. The helical transmembrane segment at 448 to 465 (VAHAASFIIFLGLLVFNA) threads the bilayer. Residues 466 to 496 (SDRFEGITTLPNITVIDYPKQIFRVKTTQFT) lie on the Extracellular side of the membrane. An N-linked (GlcNAc...) asparagine glycan is attached at N477. The helical transmembrane segment at 497–515 (WTEMLIMVWVLGMMWSECK) threads the bilayer. Ca(2+) is bound by residues E513, E516, and N531. Topologically, residues 516–528 (ELWLEGPREYIVQ) are cytoplasmic. The helical transmembrane segment at 529 to 550 (LWNVLDFGMLSIFIAAFTARFL) threads the bilayer. Residues 551–594 (AFLQATKAQQYVDSHVQESDLSEVTLPPEVQYFTYARDKWLPSD) lie on the Extracellular side of the membrane. Residues 595-618 (PQIISEGLYAIAVVLSFSRIAYIL) traverse the membrane as a helical segment. Residues 619 to 637 (PANESFGPLQISLGRTVKD) lie on the Cytoplasmic side of the membrane. An ANK 5 repeat occupies 622–651 (ESFGPLQISLGRTVKDIFKFMVLFIMVFLA). Residues 638–661 (IFKFMVLFIMVFLAFMIGMFILYS) form a helical membrane-spanning segment. The Extracellular segment spans residues 662 to 701 (YYLGAKVNPAFTTVEESFKTLFWSIFGLSEVTSVVLKYDH). Residues 702-727 (KFIENIGYVLYGIYNVTMVVVLLNML) traverse the membrane as a helical segment. At 728–909 (IAMINSSYQE…KLNPSALRCE (182 aa)) the chain is on the cytoplasmic side. Residues E859, E862, E864, and D871 each coordinate Ca(2+).

The protein belongs to the transient receptor (TC 1.A.4) family. STrpC subfamily. TRPC3 sub-subfamily. Homotetramer. Interacts with ITPR1, ITPR3, MX1 and RNF24. Interacts with JPH2; the interaction is involved in maintaining Ca(2+) homeostasis in skeletal muscle and is mediated by JPH2 'Ser-165' phosphorylation.

The protein localises to the cell membrane. The catalysed reaction is Ca(2+)(in) = Ca(2+)(out). Its activity is regulated as follows. Activated by diacylglycerol (DAG) in a membrane-delimited fashion, independently of protein kinase C. Activated by inositol 1,4,5-triphosphate receptors (ITPR) with bound IP3. May be activated by internal calcium store depletion. Inhibited by intracellular Ca(2+). Functionally, forms a receptor-activated non-selective calcium permeant cation channel. May be operated by a phosphatidylinositol second messenger system activated by receptor tyrosine kinases or G-protein coupled receptors. This chain is Short transient receptor potential channel 3 (Trpc3), found in Rattus norvegicus (Rat).